A 406-amino-acid chain; its full sequence is 11-beta-hydroxysteroid dehydrogenase type 2 (406 aa).

NAD(+) is bound at residue 82–111 (TRAVLITGCDSGFGKETAKKLDAMGFTVLA). Residue Ser219 participates in substrate binding. Tyr232 acts as the Proton acceptor in catalysis. Residues 379–406 (GQPGATPAPDTAQDNPNPNPDPSLVGAR) form a disordered region.

Belongs to the short-chain dehydrogenases/reductases (SDR) family. Interacts with ligand-free cytoplasmic NR3C2. Highly expressed in the kidney.

The protein resides in the microsome. It localises to the endoplasmic reticulum. It carries out the reaction an 11beta-hydroxysteroid + NAD(+) = an 11-oxosteroid + NADH + H(+). The enzyme catalyses corticosterone + NAD(+) = 11-dehydrocorticosterone + NADH + H(+). It catalyses the reaction cortisol + NAD(+) = cortisone + NADH + H(+). The catalysed reaction is 11beta,17beta-dihydroxyandrost-4-ene-3-one + NAD(+) = 17beta-hydroxyandrost-4-ene-3,11-dione + NADH + H(+). It carries out the reaction 11beta-hydroxyandrost-4-ene-3,17-dione + NAD(+) = androst-4-ene-3,11,17-trione + NADH + H(+). It functions in the pathway steroid metabolism. Its activity is regulated as follows. Inhibited by carbenoloxone. Its function is as follows. Catalyzes the conversion of biologically active 11beta-hydroxyglucocorticoids (11beta-hydroxysteroid) such as corticosterone, to inactive 11-ketoglucocorticoids (11-oxosteroid) such as 11-dehydrocorticosterone, in the presence of NAD(+). Functions as a dehydrogenase (oxidase), thereby decreasing the concentration of active glucocorticoids, thus protecting the nonselective mineralocorticoid receptor from occupation by glucocorticoids. Plays an important role in maintaining glucocorticoids balance during preimplantation and protects the fetus from excessive maternal corticosterone exposure. Catalyzes the oxidation of 11beta-hydroxytestosterone (11beta,17beta-dihydroxyandrost-4-ene-3-one) to 11-ketotestosterone (17beta-hydroxyandrost-4-ene-3,11-dione), a major bioactive androgen. Catalyzes the conversion of 11beta-hydroxyandrostenedione (11beta-hydroxyandrost-4-ene-3,17-dione) to 11-ketoandrostenedione (androst-4-ene-3,11,17-trione), which can be further metabolized to 11-ketotestosterone. Converts 7-beta-25-dihydroxycholesterol to 7-oxo-25-hydroxycholesterol in vitro. 7-beta-25-dihydroxycholesterol (not 7-oxo-25-hydroxycholesterol) acts as a ligand for the G-protein-coupled receptor (GPCR) Epstein-Barr virus-induced gene 2 (EBI2) and may thereby regulate immune cell migration. May protect ovulating oocytes and fertilizing spermatozoa from the adverse effects of cortisol. The chain is 11-beta-hydroxysteroid dehydrogenase type 2 (HSD11B2) from Oryctolagus cuniculus (Rabbit).